Here is a 199-residue protein sequence, read N- to C-terminus: Gamma-glutamylcyclotransferase 2-3 (199 aa).

Val5 to Ser10 contacts substrate. The active-site Proton acceptor is the Glu86.

Belongs to the gamma-glutamylcyclotransferase family. The cofactor is Mn(2+).

It localises to the cytoplasm. It carries out the reaction glutathione = L-cysteinylglycine + 5-oxo-L-proline. In terms of biological role, converts GSH to 5-oxoproline and cysteine-glycine (Cys-Gly) dipeptide in vitro and plays a significant role in glutathione (GSH) homeostasis. Has no activity towards gamma-glutamyl-L-cysteine but possesses very low activity towards gamma-glutamyl-L-alanine. This chain is Gamma-glutamylcyclotransferase 2-3, found in Arabidopsis thaliana (Mouse-ear cress).